The chain runs to 268 residues: Putative esterase/lipase 1 (268 aa).

The active site involves His-27. Ser-94 serves as the catalytic Charge relay system.

This sequence belongs to the lipase/esterase LIP3/BchO family.

The protein is Putative esterase/lipase 1 of Mycoplasma genitalium (strain ATCC 33530 / DSM 19775 / NCTC 10195 / G37) (Mycoplasmoides genitalium).